The chain runs to 662 residues: p-hydroxybenzoic acid efflux pump subunit AaeB (662 aa).

11 consecutive transmembrane segments (helical) span residues 22–42 (FAFKLSFAIVLSLFLGFHLQL), 52–72 (AAIVAAGPAFAAGGEPFSGAI), 76–96 (GMLRVVGTFIGCIGALIIIIA), 102–122 (VVMLMLCCIWAGLCTWVSSLV), 129–149 (VFGLAGYTTLIIIVSTQGTPL), 161–181 (EIVLGIVCAILADLLFSPRSI), 378–398 (LFWLSTGWTSGSVCMVMIAVV), 415–435 (FLFGTIYALPLGALMFMFIMP), 439–459 (QSMLLLCLSLGAMAFFLGLEV), 467–487 (LGALASTINILVLDNPMTFHI), and 491–511 (LDSAIGQIIGCFLALMVILLI).

It belongs to the aromatic acid exporter ArAE (TC 2.A.85) family.

The protein resides in the cell inner membrane. Forms an efflux pump with AaeA. Could function as a metabolic relief valve, allowing to eliminate certain compounds when they accumulate to high levels in the cell. This is p-hydroxybenzoic acid efflux pump subunit AaeB from Pectobacterium carotovorum subsp. carotovorum (strain PC1).